A 566-amino-acid polypeptide reads, in one-letter code: Urease subunit alpha (566 aa).

Residues Gly-128 to Phe-566 enclose the Urease domain. The Ni(2+) site is built by His-133, His-135, and Lys-216. Lys-216 carries the N6-carboxylysine modification. Residue His-218 participates in substrate binding. Residues His-245 and His-271 each contribute to the Ni(2+) site. Residue His-319 is the Proton donor of the active site. Asp-359 provides a ligand contact to Ni(2+).

It belongs to the metallo-dependent hydrolases superfamily. Urease alpha subunit family. In terms of assembly, heterotrimer of UreA (gamma), UreB (beta) and UreC (alpha) subunits. Three heterotrimers associate to form the active enzyme. The cofactor is Ni cation. In terms of processing, carboxylation allows a single lysine to coordinate two nickel ions.

Its subcellular location is the cytoplasm. It carries out the reaction urea + 2 H2O + H(+) = hydrogencarbonate + 2 NH4(+). It functions in the pathway nitrogen metabolism; urea degradation; CO(2) and NH(3) from urea (urease route): step 1/1. This chain is Urease subunit alpha, found in Nitrosococcus oceani (strain ATCC 19707 / BCRC 17464 / JCM 30415 / NCIMB 11848 / C-107).